We begin with the raw amino-acid sequence, 122 residues long: Protein MGF 100-1R (122 aa).

Belongs to the asfivirus MGF 100 family.

Functionally, plays a role in virus cell tropism, and may be required for efficient virus replication in macrophages. The polypeptide is Protein MGF 100-1R (Ornithodoros (relapsing fever ticks)).